A 38-amino-acid polypeptide reads, in one-letter code: DFASCHTNGGICLPNRCPGHMIQIGICFRPRVKCCRSW.

3 disulfides stabilise this stretch: Cys-5-Cys-34, Cys-12-Cys-27, and Cys-17-Cys-35.

It belongs to the beta-defensin family. Monomer. Homodimer. Neutrophilic granules.

It is found in the secreted. The protein resides in the membrane. Functionally, has bactericidal activity. Active against E.coli ML35 but not against S.aureus 502A. May act as a ligand for C-C chemokine receptor CCR6. Positively regulates the sperm motility and bactericidal activity in a CCR6-dependent manner. Binds to CCR6 and triggers Ca2+ mobilization in the sperm which is important for its motility. This is Beta-defensin 1 (DEFB1) from Bos taurus (Bovine).